Consider the following 406-residue polypeptide: 2,3-bisphosphoglycerate-independent phosphoglycerate mutase (406 aa).

Basic and acidic residues predominate over residues 156–165 (ITEGDPHKEG). Residues 156-177 (ITEGDPHKEGVPIPEVKPLDNS) form a disordered region.

This sequence belongs to the BPG-independent phosphoglycerate mutase family. A-PGAM subfamily.

It catalyses the reaction (2R)-2-phosphoglycerate = (2R)-3-phosphoglycerate. It functions in the pathway carbohydrate degradation; glycolysis; pyruvate from D-glyceraldehyde 3-phosphate: step 3/5. Functionally, catalyzes the interconversion of 2-phosphoglycerate and 3-phosphoglycerate. This Methanococcus aeolicus (strain ATCC BAA-1280 / DSM 17508 / OCM 812 / Nankai-3) protein is 2,3-bisphosphoglycerate-independent phosphoglycerate mutase.